We begin with the raw amino-acid sequence, 408 residues long: Aminomethyltransferase, mitochondrial (408 aa).

The N-terminal 30 residues, 1–30 (MRGGLWQLGQSITRRLANGGDKKAVARRCF), are a transit peptide targeting the mitochondrion. The substrate site is built by Glu235, Arg266, and Tyr404.

It belongs to the GcvT family. The glycine cleavage system is composed of four proteins: P, T, L and H.

Its subcellular location is the mitochondrion. It carries out the reaction N(6)-[(R)-S(8)-aminomethyldihydrolipoyl]-L-lysyl-[protein] + (6S)-5,6,7,8-tetrahydrofolate = N(6)-[(R)-dihydrolipoyl]-L-lysyl-[protein] + (6R)-5,10-methylene-5,6,7,8-tetrahydrofolate + NH4(+). In terms of biological role, the glycine cleavage system catalyzes the degradation of glycine. This Pisum sativum (Garden pea) protein is Aminomethyltransferase, mitochondrial (GDCST).